We begin with the raw amino-acid sequence, 765 residues long: uncharacterized protein (765 aa).

This is an uncharacterized protein from Methanocaldococcus jannaschii (strain ATCC 43067 / DSM 2661 / JAL-1 / JCM 10045 / NBRC 100440) (Methanococcus jannaschii).